A 485-amino-acid chain; its full sequence is U4/U6 small nuclear ribonucleoprotein Prp31 homolog (485 aa).

Disordered regions lie at residues 1–36 (MATLEDSFLADLDELSDNEAELDENDGDVGKEEEDV) and 329–361 (IEKWQEPPPARQPKPLPVPDSEPKKRRGGRRLR). Over residues 11 to 36 (DLDELSDNEAELDENDGDVGKEEEDV) the composition is skewed to acidic residues. The 119-residue stretch at 216 to 334 (IAPNLSAIVG…IRKKIEKWQE (119 aa)) folds into the Nop domain. Pro residues predominate over residues 334-348 (EPPPARQPKPLPVPD). Over residues 352–361 (KKRRGGRRLR) the composition is skewed to basic residues. Residues 352–365 (KKRRGGRRLRKMKE) carry the Nuclear localization signal motif.

It belongs to the PRP31 family. In terms of assembly, component of the U4/U6-U5 tri-snRNP complex composed of the U4, U6 and U5 snRNAs and pre-mRNA-splicing factors. Interacts with STA1 and SOP1.

It is found in the nucleus. It localises to the cajal body. Functionally, involved in pre-mRNA splicing. Required for the assembly of the U4/U5/U6 tri-snRNP complex, one of the building blocks of the spliceosome. Functions in association with STA1 and ZOP1 in spliceosome dynamics and pre-mRNA splicing. Required for transcriptional regulation and pre-mRNA splicing of cold-responsive genes, such as LTI78/RD29A, KIN2/COR6.6 or COR15A, especially under cold stress. May play a role in stress response. Involved in transcriptional gene silencing of endogenous transposable elements, independently of the RNA-directed DNA methylation (RdDM) pathway. Seems not to participate in the small RNA biogenesis of the RdDM pathway. This is U4/U6 small nuclear ribonucleoprotein Prp31 homolog from Arabidopsis thaliana (Mouse-ear cress).